A 378-amino-acid polypeptide reads, in one-letter code: Manganese peroxidase 1 (378 aa).

The signal sequence occupies residues 1 to 21 (MAFKSLIAFVALAAAVRAAPT). 5 disulfide bridges follow: C24–C36, C35–C310, C54–C138, C274–C340, and C362–C369. Residues E56 and E60 each contribute to the Mn(2+) site. H67 functions as the Proton acceptor in the catalytic mechanism. Ca(2+) is bound by residues D68, G83, D85, and S87. N97 and N152 each carry an N-linked (GlcNAc...) asparagine glycan. H194 is a binding site for heme b. S195 is a binding site for Ca(2+). D200 is a Mn(2+) binding site. The Ca(2+) site is built by D212, T214, T217, and D219. N238 carries N-linked (GlcNAc...) asparagine glycosylation.

The protein belongs to the peroxidase family. Ligninase subfamily. It depends on Ca(2+) as a cofactor. Heme b serves as cofactor.

It is found in the secreted. It carries out the reaction 2 Mn(2+) + H2O2 + 2 H(+) = 2 Mn(3+) + 2 H2O. Functionally, catalyzes the oxidation of Mn(2+) to Mn(3+). The latter, acting as a diffusible redox mediator, is capable of oxidizing a variety of lignin compounds. This Phanerodontia chrysosporium (White-rot fungus) protein is Manganese peroxidase 1 (MNP1).